The sequence spans 702 residues: Methionine--tRNA ligase (702 aa).

Positions P23–H33 match the 'HIGH' region motif. C154, C157, C167, and C170 together coordinate Zn(2+). A 'KMSKS' region motif is present at residues K341–S345. Residue K344 participates in ATP binding. The segment at L562 to P593 is disordered. Polar residues predominate over residues A569–N578. Positions D599–R702 constitute a tRNA-binding domain.

Belongs to the class-I aminoacyl-tRNA synthetase family. MetG type 1 subfamily. Homodimer. Zn(2+) is required as a cofactor.

It is found in the cytoplasm. The catalysed reaction is tRNA(Met) + L-methionine + ATP = L-methionyl-tRNA(Met) + AMP + diphosphate. In terms of biological role, is required not only for elongation of protein synthesis but also for the initiation of all mRNA translation through initiator tRNA(fMet) aminoacylation. This chain is Methionine--tRNA ligase, found in Xylella fastidiosa (strain M12).